Consider the following 702-residue polypeptide: Transposon Tn7 transposition protein TnsB (702 aa).

Residues 1-139 form a DNA-binding domain 1 (DBD1) region; it reads MWQINEVVLF…GQTPNALIPD (139 aa). Positions 105–124 form a DNA-binding region, H-T-H motif; the sequence is VEHVVQEHKVTKATVYKLLR. A disordered region spans residues 137–160; the sequence is IPDYKNSGAPGERRSATGTAKIGR. The segment at 140–172 is linker 1; the sequence is YKNSGAPGERRSATGTAKIGRAREYGKGEGTKV. The DNA-binding domain 2 (DBD2) stretch occupies residues 173 to 233; that stretch reads TPEIERLFRL…QFRYFYDREY (61 aa). The segment at 234-267 is linker 2; the sequence is PKAQRLKSRVKAGVYKKDVRPLSSTATSQALGPG. The region spanning 262–480 is the Integrase catalytic domain; sequence QALGPGSRYE…IPVQLWQWGM (219 aa). The interval 268–582 is catalytic domain (CD); it reads SRYEIDATIA…RSRQFKGLSF (315 aa). The tract at residues 589–702 is C-terminal domain; the sequence is QAQEKHNKAN…FQDPPEKDES (114 aa). The disordered stretch occupies residues 623–702; the sequence is KLTPSTTEPK…FQDPPEKDES (80 aa).

In terms of assembly, heteromer with TnsA.

Functionally, sequence-specific, DNA-binding protein required for Tn7 transposition. Recognizes sequences necessary for recombination at both left and right ends of Tn7 and, together with TnsA, forms the transposase. TnsB executes the 3'-DNA strand breakage and joining reactions. TnsB binding introduces DNA bending. There are 3 DNA-binding sites in the left and 4 in the right end of Tn7; as TnsB levels increase more TnsB is bound, suggesting high protein levels contribute to transposon immunity. Binding of TnsB to the transposon right end represses expression of the downstream transposition genes. TnsABC + TnsD promote high-frequency insertion of Tn7 into a specific target site known as att-Tn7 whereas TnsABC + TnsE promote low-frequency insertion into many different sites. The protein is Transposon Tn7 transposition protein TnsB of Escherichia coli.